A 402-amino-acid polypeptide reads, in one-letter code: Indole-3-glycerol phosphate synthase, chloroplastic (402 aa).

The transit peptide at 1-65 (MEGLVPVQRL…SDLKESLAVS (65 aa)) directs the protein to the chloroplast.

Belongs to the TrpC family. In terms of tissue distribution, expressed in leaves.

Its subcellular location is the plastid. The protein resides in the chloroplast. The enzyme catalyses 1-(2-carboxyphenylamino)-1-deoxy-D-ribulose 5-phosphate + H(+) = (1S,2R)-1-C-(indol-3-yl)glycerol 3-phosphate + CO2 + H2O. Its pathway is amino-acid biosynthesis; L-tryptophan biosynthesis; L-tryptophan from chorismate: step 4/5. Functionally, indole-3-glycerol phosphate synthase required for tryptophan biosynthesis. The sequence is that of Indole-3-glycerol phosphate synthase, chloroplastic from Arabidopsis thaliana (Mouse-ear cress).